Consider the following 882-residue polypeptide: Valine--tRNA ligase (882 aa).

A 'HIGH' region motif is present at residues 45–55 (PNVTGSLHIGH). The 'KMSKS' region signature appears at 525–529 (KFSKS). Position 528 (Lys-528) interacts with ATP. Positions 812–881 (EGLIDVAKEK…VLKKGIQNLA (70 aa)) form a coiled coil.

It belongs to the class-I aminoacyl-tRNA synthetase family. ValS type 1 subfamily. In terms of assembly, monomer.

It localises to the cytoplasm. The enzyme catalyses tRNA(Val) + L-valine + ATP = L-valyl-tRNA(Val) + AMP + diphosphate. Its function is as follows. Catalyzes the attachment of valine to tRNA(Val). As ValRS can inadvertently accommodate and process structurally similar amino acids such as threonine, to avoid such errors, it has a 'posttransfer' editing activity that hydrolyzes mischarged Thr-tRNA(Val) in a tRNA-dependent manner. The polypeptide is Valine--tRNA ligase (Leptospira interrogans serogroup Icterohaemorrhagiae serovar copenhageni (strain Fiocruz L1-130)).